Consider the following 182-residue polypeptide: Probable tyrosine phosphatase protein H4 (182 aa).

The 182-residue stretch at 1-182 (MEINKFICSQ…TVLKIQKSKI (182 aa)) folds into the Tyrosine-protein phosphatase domain. Cys142 acts as the Phosphocysteine intermediate in catalysis.

This sequence belongs to the protein-tyrosine phosphatase family.

It catalyses the reaction O-phospho-L-tyrosyl-[protein] + H2O = L-tyrosyl-[protein] + phosphate. This chain is Probable tyrosine phosphatase protein H4 (H5), found in Microplitis demolitor (Parasitoid wasp).